A 209-amino-acid chain; its full sequence is Small ribosomal subunit protein uS3 (209 aa).

The KH type-2 domain occupies 38-107 (IRKIIKNKYY…RVVINIEEIK (70 aa)).

The protein belongs to the universal ribosomal protein uS3 family. In terms of assembly, part of the 30S ribosomal subunit. Forms a tight complex with proteins S10 and S14.

Its function is as follows. Binds the lower part of the 30S subunit head. Binds mRNA in the 70S ribosome, positioning it for translation. The polypeptide is Small ribosomal subunit protein uS3 (Thermotoga maritima (strain ATCC 43589 / DSM 3109 / JCM 10099 / NBRC 100826 / MSB8)).